The following is a 134-amino-acid chain: MKKTPLLNVALSRLIASLGHGDVVVIGDAGLPVPPGVELIDLALTHGVPDFVSTLKVVLSEMQVESHALAKEIFDKQPTALSTLDELNDEGSLGRRDLLSHEQFKVLSRQARAIVRTGECQPYCNIVLVAGVTF.

The active-site Proton donor is the H20. Substrate-binding positions include D28, H101, and 123 to 125 (YCN).

The protein belongs to the RbsD / FucU family. RbsD subfamily. As to quaternary structure, homodecamer.

Its subcellular location is the cytoplasm. The catalysed reaction is beta-D-ribopyranose = beta-D-ribofuranose. It participates in carbohydrate metabolism; D-ribose degradation; D-ribose 5-phosphate from beta-D-ribopyranose: step 1/2. In terms of biological role, catalyzes the interconversion of beta-pyran and beta-furan forms of D-ribose. This is D-ribose pyranase from Pseudomonas fluorescens (strain Pf0-1).